The chain runs to 266 residues: Apolipoprotein A-I (266 aa).

The first 18 residues, 1 to 18 (MKAVVLTLAVLFLTGSQA), serve as a signal peptide directing secretion. 2 repeat units span residues 67 to 88 (LKLL…EQIG) and 89 to 110 (PVTQ…QEMN). The tract at residues 67–266 (LKLLDNWDSL…DEATKKLNAQ (200 aa)) is 10 X approximate tandem repeats. M109 carries the methionine sulfoxide modification. Residues 111–121 (KDLEEVKKKVQ) form a 3; half-length repeat. Tandem repeats lie at residues 122-143 (PYLD…QKVA), 144-165 (PLGA…EKLS), 166-187 (PLGE…AQLA), 188-209 (PYSE…EGGG), and 210-231 (ATLT…EKAK). Residues 232-242 (PALEDLRQGLM) form a 9; half-length repeat. Copy 10 of the repeat occupies 243–266 (PVLESFRASLLAAVDEATKKLNAQ).

This sequence belongs to the apolipoprotein A1/A4/E family. In terms of assembly, homodimer. Interacts with APOA1BP and CLU. Component of a sperm activating protein complex (SPAP), consisting of APOA1, an immunoglobulin heavy chain, an immunoglobulin light chain and albumin. Interacts with NDRG1. Interacts with SCGB3A2. Interacts with NAXE and YJEFN3. In terms of processing, glycosylated. Palmitoylated. Post-translationally, phosphorylation sites are present in the extracellular medium.

The protein localises to the secreted. Its function is as follows. Participates in the reverse transport of cholesterol from tissues to the liver for excretion by promoting cholesterol efflux from tissues and by acting as a cofactor for the lecithin cholesterol acyltransferase (LCAT). As part of the SPAP complex, activates spermatozoa motility. In Phoca vitulina (Harbor seal), this protein is Apolipoprotein A-I (APOA1).